The sequence spans 135 residues: MATVQQLVGRWRLVESKGFDEYMKEVGVGMALRKVGAMAKPDCIITSDGKNLSIKTESTLKTTQFSCKLGEKFEETTADGRKTQTVCNFTDGALVQHQEWDGKESTITRKLEDGKLVVVCVMNNVTCTRVYEKVE.

Alanine 2 is subject to N-acetylalanine. N6-acetyllysine is present on lysine 17. Tyrosine 22 carries the post-translational modification Phosphotyrosine; by Tyr-kinases. Residues 24 to 34 (KEVGVGMALRK) carry the Nuclear localization signal motif. 2 residues coordinate N-eicosanoyl ethanolamine: cysteine 43 and arginine 109. An intrachain disulfide couples cysteine 120 to cysteine 127. 129–131 (RVY) is a (9Z,12Z)-octadecadienoate binding site. N-eicosanoyl ethanolamine is bound at residue tyrosine 131. Tyrosine 131 is a hexadecanoate binding site. Phosphotyrosine is present on tyrosine 131.

The protein belongs to the calycin superfamily. Fatty-acid binding protein (FABP) family. As to quaternary structure, monomer. Most abundant in lens and retina (found in the mueller cells), moderately abundant in heart and testis (found in the Sertoli cells), and present in very low amounts in lung.

The protein resides in the cytoplasm. It is found in the nucleus. It localises to the synapse. Its subcellular location is the postsynaptic density. The protein localises to the secreted. It catalyses the reaction hexadecanoate(out) = hexadecanoate(in). It carries out the reaction (9Z,12Z)-octadecadienoate(out) = (9Z,12Z)-octadecadienoate(in). The enzyme catalyses (9Z)-octadecenoate(out) = (9Z)-octadecenoate(in). Intracellular carrier for long-chain fatty acids and related active lipids, such as endocannabinoids, that regulate the metabolism and actions of the ligands they bind. In addition to the cytosolic transport, selectively delivers specific fatty acids from the cytosol to the nucleus, wherein they activate nuclear receptors. Delivers retinoic acid to the nuclear receptor peroxisome proliferator-activated receptor delta; which promotes proliferation and survival. May also serve as a synaptic carrier of endocannabinoid at central synapses and thus controls retrograde endocannabinoid signaling. Modulates inflammation by regulating PTGES induction via NF-kappa-B activation, and prostaglandin E2 (PGE2) biosynthesis during inflammation. The sequence is that of Fatty acid-binding protein 5 (FABP5) from Bos taurus (Bovine).